A 388-amino-acid polypeptide reads, in one-letter code: Succinate--CoA ligase [ADP-forming] subunit beta (388 aa).

Positions 9–236 (KKLFAEHGVP…VAAVDPLEQK (228 aa)) constitute an ATP-grasp domain. Residues K45, 52 to 54 (GRG), E91, S94, and E99 each bind ATP. Mg(2+)-binding residues include N191 and D205. Substrate is bound by residues N256 and 318 to 320 (GIT).

It belongs to the succinate/malate CoA ligase beta subunit family. Heterotetramer of two alpha and two beta subunits. It depends on Mg(2+) as a cofactor.

The catalysed reaction is succinate + ATP + CoA = succinyl-CoA + ADP + phosphate. The enzyme catalyses GTP + succinate + CoA = succinyl-CoA + GDP + phosphate. The protein operates within carbohydrate metabolism; tricarboxylic acid cycle; succinate from succinyl-CoA (ligase route): step 1/1. In terms of biological role, succinyl-CoA synthetase functions in the citric acid cycle (TCA), coupling the hydrolysis of succinyl-CoA to the synthesis of either ATP or GTP and thus represents the only step of substrate-level phosphorylation in the TCA. The beta subunit provides nucleotide specificity of the enzyme and binds the substrate succinate, while the binding sites for coenzyme A and phosphate are found in the alpha subunit. The polypeptide is Succinate--CoA ligase [ADP-forming] subunit beta (Parafrankia sp. (strain EAN1pec)).